The chain runs to 146 residues: Leptin (146 aa).

A disulfide bridge links C96 with C146.

This sequence belongs to the leptin family.

Its subcellular location is the secreted. Its function is as follows. Key player in the regulation of energy balance and body weight control. Once released into the circulation, has central and peripheral effects by binding LEPR, found in many tissues, which results in the activation of several major signaling pathways. In the hypothalamus, acts as an appetite-regulating factor that induces a decrease in food intake and an increase in energy consumption by inducing anorexinogenic factors and suppressing orexigenic neuropeptides, also regulates bone mass and secretion of hypothalamo-pituitary-adrenal hormones. In the periphery, increases basal metabolism, influences reproductive function, regulates pancreatic beta-cell function and insulin secretion, is pro-angiogenic for endothelial cell and affects innate and adaptive immunity. In the arcuate nucleus of the hypothalamus, activates by depolarization POMC neurons inducing FOS and SOCS3 expression to release anorexigenic peptides and inhibits by hyperpolarization NPY neurons inducing SOCS3 with a consequent reduction on release of orexigenic peptides. In addition to its known satiety inducing effect, has a modulatory role in nutrient absorption. In the intestine, reduces glucose absorption by enterocytes by activating PKC and leading to a sequential activation of p38, PI3K and ERK signaling pathways which exerts an inhibitory effect on glucose absorption. Acts as a growth factor on certain tissues, through the activation of different signaling pathways increases expression of genes involved in cell cycle regulation such as CCND1, via JAK2-STAT3 pathway, or VEGFA, via MAPK1/3 and PI3K-AKT1 pathways. May also play an apoptotic role via JAK2-STAT3 pathway and up-regulation of BIRC5 expression. Pro-angiogenic, has mitogenic activity on vascular endothelial cells and plays a role in matrix remodeling by regulating the expression of matrix metalloproteinases (MMPs) and tissue inhibitors of metalloproteinases (TIMPs). In innate immunity, modulates the activity and function of neutrophils by increasing chemotaxis and the secretion of oxygen radicals. Increases phagocytosis by macrophages and enhances secretion of pro-inflammatory mediators. Increases cytotoxic ability of NK cells. Plays a pro-inflammatory role, in synergy with IL1B, by inducing NOS2 which promotes the production of IL6, IL8 and Prostaglandin E2, through a signaling pathway that involves JAK2, PI3K, MAP2K1/MEK1 and MAPK14/p38. In adaptive immunity, promotes the switch of memory T-cells towards T helper-1 cell immune responses. Increases CD4(+)CD25(-) T-cell proliferation and reduces autophagy during TCR (T-cell receptor) stimulation, through MTOR signaling pathway activation and BCL2 up-regulation. In Pongo pygmaeus (Bornean orangutan), this protein is Leptin (LEP).